Consider the following 75-residue polypeptide: DNA-directed RNA polymerase subunit omega (75 aa).

Belongs to the RNA polymerase subunit omega family. In terms of assembly, in cyanobacteria the RNAP catalytic core is composed of 2 alpha, 1 beta, 1 beta', 1 gamma and 1 omega subunit. When a sigma factor is associated with the core the holoenzyme is formed, which can initiate transcription.

The enzyme catalyses RNA(n) + a ribonucleoside 5'-triphosphate = RNA(n+1) + diphosphate. Functionally, promotes RNA polymerase assembly. Latches the N- and C-terminal regions of the beta' subunit thereby facilitating its interaction with the beta and alpha subunits. This chain is DNA-directed RNA polymerase subunit omega, found in Prochlorococcus marinus (strain MIT 9313).